The following is a 118-amino-acid chain: Large ribosomal subunit protein bL20 (118 aa).

It belongs to the bacterial ribosomal protein bL20 family.

Functionally, binds directly to 23S ribosomal RNA and is necessary for the in vitro assembly process of the 50S ribosomal subunit. It is not involved in the protein synthesizing functions of that subunit. The polypeptide is Large ribosomal subunit protein bL20 (Trichormus variabilis (strain ATCC 29413 / PCC 7937) (Anabaena variabilis)).